Here is a 315-residue protein sequence, read N- to C-terminus: Intradiol ring-cleavage dioxygenase prcA (315 aa).

Fe cation is bound by residues tyrosine 166, tyrosine 200, histidine 224, and histidine 226. Positions 287-315 (KKHHPNPNSAPPVSSFERFNKASKTQEKL) are disordered. A compositionally biased stretch (basic and acidic residues) spans 304-315 (RFNKASKTQEKL).

It belongs to the intradiol ring-cleavage dioxygenase family. Homodimer. Requires Fe(3+) as cofactor.

It carries out the reaction 3,4-dihydroxybenzoate + O2 = 3-carboxy-cis,cis-muconate + 2 H(+). Its function is as follows. Intradiol ring-cleavage dioxygenase; part of the benzoic acid degradation pathway also known as the protocatechuic acid pathway. Benzoic acid debradation begins with the conversion of benzoic acid into 4-hydroxybenzoic acid through hydroxylation by the benzoate-4-monooxygenase bphA, and its partner NADPH-cytochrome P450 reductase cprA which act as a mediator in electron donation from NADPH. 4-Hydroxybenzoic acid is then converted into 3,4-dihydroxybenzoic acid (also called protocatechuic acid) by the p-hydroxybenzoate-m-hydroxylase phhA. Protocatechuic acid is converted into 3-carboxy-cis,cis-muconic acid by the intradiol ring-cleavage dioxygenase prcA, which is further metabolized through the 3-oxoadipate pathway to finally enter the tricarboxylic acid cycle (TCA). The polypeptide is Intradiol ring-cleavage dioxygenase prcA (Aspergillus niger (strain ATCC MYA-4892 / CBS 513.88 / FGSC A1513)).